A 364-amino-acid chain; its full sequence is 3-isopropylmalate dehydrogenase (364 aa).

77 to 90 contacts NAD(+); it reads GPKWDNLPTDKRPE. Substrate contacts are provided by arginine 97, arginine 107, arginine 135, and aspartate 224. Positions 224, 248, and 252 each coordinate Mg(2+). Residue 281–293 participates in NAD(+) binding; the sequence is GSAPDIAGKGIAN.

It belongs to the isocitrate and isopropylmalate dehydrogenases family. LeuB type 1 subfamily. In terms of assembly, homodimer. The cofactor is Mg(2+). Requires Mn(2+) as cofactor.

Its subcellular location is the cytoplasm. It carries out the reaction (2R,3S)-3-isopropylmalate + NAD(+) = 4-methyl-2-oxopentanoate + CO2 + NADH. Its pathway is amino-acid biosynthesis; L-leucine biosynthesis; L-leucine from 3-methyl-2-oxobutanoate: step 3/4. In terms of biological role, catalyzes the oxidation of 3-carboxy-2-hydroxy-4-methylpentanoate (3-isopropylmalate) to 3-carboxy-4-methyl-2-oxopentanoate. The product decarboxylates to 4-methyl-2 oxopentanoate. The polypeptide is 3-isopropylmalate dehydrogenase (leuB) (Aquifex aeolicus (strain VF5)).